Reading from the N-terminus, the 210-residue chain is Na(+)-translocating NADH-quinone reductase subunit D (210 aa).

6 consecutive transmembrane segments (helical) span residues 14–34 (PIVNNNPIALQVLGVCSALAV), 42–62 (LVMALALTAVTAFSNLFISMI), 72–92 (IIVQMTIIASLVIVVDQLLQA), 103–123 (VFVGLIITNCIVMGRAEAYAM), 131–151 (FMDGIGNGLGYGAILLAVGFV), and 178–198 (NGLLLLPPSAFFLIGILIWII).

The protein belongs to the NqrDE/RnfAE family. In terms of assembly, composed of six subunits; NqrA, NqrB, NqrC, NqrD, NqrE and NqrF.

Its subcellular location is the cell inner membrane. It catalyses the reaction a ubiquinone + n Na(+)(in) + NADH + H(+) = a ubiquinol + n Na(+)(out) + NAD(+). Functionally, NQR complex catalyzes the reduction of ubiquinone-1 to ubiquinol by two successive reactions, coupled with the transport of Na(+) ions from the cytoplasm to the periplasm. NqrA to NqrE are probably involved in the second step, the conversion of ubisemiquinone to ubiquinol. The polypeptide is Na(+)-translocating NADH-quinone reductase subunit D (Shewanella sp. (strain ANA-3)).